Reading from the N-terminus, the 148-residue chain is Small ribosomal subunit protein uS13 (148 aa).

It belongs to the universal ribosomal protein uS13 family. As to quaternary structure, part of the 30S ribosomal subunit. Forms a loose heterodimer with protein S19. Forms two bridges to the 50S subunit in the 70S ribosome.

Its function is as follows. Located at the top of the head of the 30S subunit, it contacts several helices of the 16S rRNA. In the 70S ribosome it contacts the 23S rRNA (bridge B1a) and protein L5 of the 50S subunit (bridge B1b), connecting the 2 subunits; these bridges are implicated in subunit movement. The sequence is that of Small ribosomal subunit protein uS13 from Pyrococcus abyssi (strain GE5 / Orsay).